Here is a 381-residue protein sequence, read N- to C-terminus: L-lactate dehydrogenase (381 aa).

An FMN hydroxy acid dehydrogenase domain is found at 1–380 (MIISASTDYR…SRDSLVRELG (380 aa)). Tyrosine 24 is a substrate binding site. Serine 106 and glutamine 127 together coordinate FMN. Tyrosine 129 provides a ligand contact to substrate. An FMN-binding site is contributed by threonine 155. A substrate-binding site is contributed by arginine 164. Lysine 251 lines the FMN pocket. The active-site Proton acceptor is the histidine 275. Residue arginine 278 participates in substrate binding. An FMN-binding site is contributed by 306–330 (DSGIRSGLDVVRMIALGADTVLIGR).

The protein belongs to the FMN-dependent alpha-hydroxy acid dehydrogenase family. Homotetramer. FMN is required as a cofactor.

It is found in the cell inner membrane. It carries out the reaction (S)-lactate + A = pyruvate + AH2. Its function is as follows. Catalyzes the conversion of L-lactate to pyruvate. Is coupled to the respiratory chain. This Pseudomonas putida (strain W619) protein is L-lactate dehydrogenase.